The sequence spans 235 residues: CD-NTase-associated protein 13 (235 aa).

2 helical membrane passes run 14 to 34 and 45 to 65; these read IVHHVSTSLNIISFIIVLIWI and IIFTVNLEAIVVFISILIVGL.

The protein in the C-terminal section; belongs to the bacterial STING family. As to quaternary structure, homodimer.

The protein resides in the cell inner membrane. Functionally, effector protein of a CBASS antivirus system. CBASS (cyclic oligonucleotide-based antiphage signaling system) provides immunity against bacteriophage. The CD-NTase protein synthesizes cyclic nucleotides in response to infection; these serve as specific second messenger signals. The signals activate a diverse range of effectors, leading to bacterial cell death and thus abortive phage infection. A type I-D(GG) CBASS system. Its function is as follows. Binds cyclic dinucleotides: binds c-di-GMP (synthesized by the cognate CdnE encoded upstream in the same operon), cyclic 3'3'-cyclic GMP-AMP (3'3'-cGAMP) but not cUMP-AMP. The effector protein for this CBASS system, its activity is stimulated by c-di-GMP and leads to cell death. The polypeptide is CD-NTase-associated protein 13 (Flavobacteriaceae sp. genome_bin_11).